A 164-amino-acid chain; its full sequence is MSTTSAQATAVVTGSFLSGAMISLSLMAVPVLLDTTTEPTQLFFQWRRMYHYGHQVLPTMAVATTLLYAYTASKRRRAQKPSWAVFALAGTITVSMIPFTWLCMVPTNNVLFGLEAATRLGEPSGMGIEEAQALLVKWSWLHFTRSLMPLMGAILGSLGETVWN.

Helical transmembrane passes span 11-31, 48-70, and 85-105; these read VVTG…AVPV, RMYH…LYAY, and VFAL…LCMV.

This sequence belongs to the anthrone oxygenase family.

Its subcellular location is the membrane. The catalysed reaction is emodin anthrone + O2 = emodin + H2O + H(+). Its pathway is secondary metabolite biosynthesis. Anthrone oxygenase; part of the gene cluster that mediates the biosynthesis of agnestins, dihydroxy-xanthone metabolites. The pathway begins with the assembly and cyclization of atrochrysone thioester by the non-reducing polyketide synthase Agnpks1. The atrochrysone carboxyl ACP thioesterase AgnL7 then breaks the thioester bond and releases the atrochrysone carboxylic acid as the first enzyme-free intermediate. The decarboxylase AgnL1 then catalyzes the concerted decarboxylation-elimination required to convert atochrysone carboxylic acid into emodin anthrone, which is further oxidized to emodin by the anthrone oxygenase AgnL2. Emodin then undergoes reduction catalyzed by the oxidoreductase AgnL4 to yield the dihydroquinone tautomer which is the substrate for reduction by the short chain dehydrogenase AgnL6 reduction to produce hydroxyketone, followed by AgnL8 dehydration and likely spontaneous autoxidation to chrysophanol. Baeyer-Villiger oxidation by the oxidase AgnL3 leads to monodictyphenone via cleavage of the C-10/C-10a bond of chrysophanol. Alternative cleavage at the C-4a/C-10 bond of chrysophanol also leads to the formation some cephalone F. Further conversion to agnestins A and B, requires reduction to dihydro-monodictyphenone, oxidation to agnestin C probably via an epoxide, and rearrangement to either agnestin A or agnestin B directly, although agnestin A or agnestin B can also interconvert. Within the cluster, AgnR1 is the only unassigned oxidoreductase present which could be involved in this conversion. However, AgnR1 seems not to be involved in this step, and thus genes involved in the proposed oxidation/reduction may be located elsewhere on the genome. Further agnestin A derivatives are probably formed by spontaneous decarboxylations, dehydrations and methanolysis reactions. This chain is Anthrone oxygenase AgnL2, found in Paecilomyces divaricatus (Penicillium divaricatum).